The primary structure comprises 206 residues: Large ribosomal subunit protein uL4 (206 aa).

The interval 43-78 (ARSGNRKQKDREEVKHTTKKPWRQKGTGRARAGMSS) is disordered. Over residues 49 to 58 (KQKDREEVKH) the composition is skewed to basic and acidic residues. Over residues 59–70 (TTKKPWRQKGTG) the composition is skewed to basic residues.

This sequence belongs to the universal ribosomal protein uL4 family. Part of the 50S ribosomal subunit.

In terms of biological role, one of the primary rRNA binding proteins, this protein initially binds near the 5'-end of the 23S rRNA. It is important during the early stages of 50S assembly. It makes multiple contacts with different domains of the 23S rRNA in the assembled 50S subunit and ribosome. Functionally, forms part of the polypeptide exit tunnel. This is Large ribosomal subunit protein uL4 from Ralstonia pickettii (strain 12J).